The primary structure comprises 317 residues: Carbamate kinase (317 aa).

It belongs to the carbamate kinase family. Homodimer.

The catalysed reaction is hydrogencarbonate + NH4(+) + ATP = carbamoyl phosphate + ADP + H2O + H(+). The protein operates within metabolic intermediate metabolism; carbamoyl phosphate degradation; CO(2) and NH(3) from carbamoyl phosphate: step 1/1. The polypeptide is Carbamate kinase (CBK) (Giardia intestinalis (Giardia lamblia)).